A 657-amino-acid polypeptide reads, in one-letter code: Transcription factor 12 (657 aa).

The span at 1–20 (MDEKGGTTSWGTSGQPSPSY) shows a compositional bias: polar residues. Disordered stretches follow at residues 1–76 (MDEK…SGLS), 89–285 (LGSP…QTGD), 297–340 (PDHT…YENS), 459–555 (VSAQ…ERRM), and 628–657 (KVSA…MGHM). Over residues 30–43 (HYSDHLNDSRKGTH) the composition is skewed to basic and acidic residues. 2 stretches are compositionally biased toward polar residues: residues 49–70 (TPFS…SLYS) and 93–112 (AQLS…SATS). The leucine-zipper stretch occupies residues 68-89 (LYSRDSGLSGCQSSLLRQELGL). Residues 130 to 136 (KKVRKVP) carry the Nuclear localization signal motif. 3 stretches are compositionally biased toward polar residues: residues 168–193 (MFAS…NGMS), 202–216 (GTST…SYGS), and 230–254 (VSPT…SSSP). The segment covering 300 to 311 (TSSSFPSNPSTP) has biased composition (low complexity). Positions 312-340 (VGSPSPLTGASQWSRSGGQAPSSPNYENS) are enriched in polar residues. Basic and acidic residues-rich tracts occupy residues 493 to 505 (IKSE…ENIH), 511 to 526 (DDMK…DIKV), and 543 to 555 (PEQK…ERRM). Residues 552-605 (ERRMANNARERLRVRDINEAFKELGRMCQLHLKSEKPQTKLLILHQAVAVILSL) form the bHLH domain. Residues 607-630 (QQVRERNLNPKAACLKRREEEKVS) are class A specific domain. Polar residues predominate over residues 648–657 (SETTNPMGHM).

Efficient DNA binding requires dimerization with another bHLH protein. Forms homo- or heterooligomers with myogenin, E12 and ITF2 proteins.

Its subcellular location is the nucleus. In terms of biological role, transcriptional regulator. Involved in the initiation of neuronal differentiation. Activates transcription by binding to the E box-containing promoter. This chain is Transcription factor 12 (TCF12), found in Gallus gallus (Chicken).